The primary structure comprises 156 residues: MTLFFSHRLFTVWRLKCGVMDIGWPSVLPAAGKKYQIELPVVHEEELEEQFVRGSGPGGQATNKTSNCVVLRHIPSGIVVKCHETRSVDLNRKRAREILREKLEVAYKGEESELLKMKKESMQKKQDKRRKVNENIEKKRRFKEMLNSKQEDDKST.

The segment at 44–108 (EEELEEQFVR…LREKLEVAYK (65 aa)) is GGQ domain. The short motif at 58-60 (GGQ) is the GGQ element. Residues 100-141 (REKLEVAYKGEESELLKMKKESMQKKQDKRRKVNENIEKKRR) are a coiled coil. Basic and acidic residues-rich tracts occupy residues 114–125 (LLKMKKESMQKK) and 132–156 (VNEN…DKST). A disordered region spans residues 114 to 156 (LLKMKKESMQKKQDKRRKVNENIEKKRRFKEMLNSKQEDDKST).

It belongs to the prokaryotic/mitochondrial release factor family. As to quaternary structure, interacts (via C-terminus) with MTRES1 (via S4 domain). Associates with mitoribosomal S39 large subunit, peptidyl tRNA and nascent chain.

It localises to the mitochondrion. Part of a mitoribosome-associated quality control pathway that prevents aberrant translation by responding to interruptions during elongation. As heterodimer with MTRES1, ejects the unfinished nascent chain and peptidyl transfer RNA (tRNA), respectively, from stalled ribosomes. Recruitment of mitoribosome biogenesis factors to these quality control intermediates suggests additional roles for MTRES1 and MTRF during mitoribosome rescue. The protein is Mitochondrial translation release factor in rescue (mtrfr) of Danio rerio (Zebrafish).